The sequence spans 260 residues: Late transcription factor 1 (260 aa).

The protein belongs to the chordopoxvirinae VLTF-1 family. As to quaternary structure, interacts with the late transcription factors VLTF-2 and VLTF-3. Interacts with the late transcription elongation factor H5/VLTF-4. Interacts with itself.

Its function is as follows. Associates with RNA polymerase to initiate transcription from late gene promoters. The polypeptide is Late transcription factor 1 (VLTF1) (Vertebrata (FPV)).